The primary structure comprises 177 residues: ATP synthase subunit delta (177 aa).

Belongs to the ATPase delta chain family. As to quaternary structure, F-type ATPases have 2 components, F(1) - the catalytic core - and F(0) - the membrane proton channel. F(1) has five subunits: alpha(3), beta(3), gamma(1), delta(1), epsilon(1). F(0) has three main subunits: a(1), b(2) and c(10-14). The alpha and beta chains form an alternating ring which encloses part of the gamma chain. F(1) is attached to F(0) by a central stalk formed by the gamma and epsilon chains, while a peripheral stalk is formed by the delta and b chains.

The protein localises to the cell inner membrane. In terms of biological role, f(1)F(0) ATP synthase produces ATP from ADP in the presence of a proton or sodium gradient. F-type ATPases consist of two structural domains, F(1) containing the extramembraneous catalytic core and F(0) containing the membrane proton channel, linked together by a central stalk and a peripheral stalk. During catalysis, ATP synthesis in the catalytic domain of F(1) is coupled via a rotary mechanism of the central stalk subunits to proton translocation. Functionally, this protein is part of the stalk that links CF(0) to CF(1). It either transmits conformational changes from CF(0) to CF(1) or is implicated in proton conduction. This Janthinobacterium sp. (strain Marseille) (Minibacterium massiliensis) protein is ATP synthase subunit delta.